Reading from the N-terminus, the 230-residue chain is Type II restriction enzyme Eco47I (230 aa).

The enzyme catalyses Endonucleolytic cleavage of DNA to give specific double-stranded fragments with terminal 5'-phosphates.. Its function is as follows. A P subtype restriction enzyme that recognizes the double-stranded sequence 5'-GGWCC-3' and cleaves after G-1. The chain is Type II restriction enzyme Eco47I from Escherichia coli.